The following is a 253-amino-acid chain: NAC transcription factor 32 (253 aa).

The region spanning 10 to 160 (FPPGFRFHPT…DWVLCRIYNK (151 aa)) is the NAC domain. A DNA-binding region spans residues 106 to 166 (VGIKKALVFY…IYNKKGVIEK (61 aa)).

Expressed in germinating seeds, roots, leaf veins, open flowers and silique stalks.

Its subcellular location is the nucleus. Its function is as follows. Transcriptional activator that positively regulates age-dependent senescence, dark-induced leaf senescence and stress-induced senescence. Regulates leaf senescence through the modulation of the expression of senescence-associated genes SGR1/NYE1, SAG113 and SAUR36/SAG201, which are involved in chlorophyll degradation, and abscisic acid (ABA) and auxin promotion of senescence, respectively. Promotes reactive oxygen species (ROS) production during age-dependent and stress-induced senescence. Positively regulates auxin-mediated responses in roots. Stress-responsive NAC transcription factor involved in ABA-inducible leaf senescence signaling. Required for normal seed development and morphology. This chain is NAC transcription factor 32, found in Arabidopsis thaliana (Mouse-ear cress).